A 186-amino-acid polypeptide reads, in one-letter code: ATP synthase subunit delta (186 aa).

Belongs to the ATPase delta chain family. In terms of assembly, F-type ATPases have 2 components, F(1) - the catalytic core - and F(0) - the membrane proton channel. F(1) has five subunits: alpha(3), beta(3), gamma(1), delta(1), epsilon(1). CF(0) has four main subunits: a(1), b(1), b'(1) and c(10-14). The alpha and beta chains form an alternating ring which encloses part of the gamma chain. F(1) is attached to F(0) by a central stalk formed by the gamma and epsilon chains, while a peripheral stalk is formed by the delta, b and b' chains.

Its subcellular location is the cell inner membrane. In terms of biological role, f(1)F(0) ATP synthase produces ATP from ADP in the presence of a proton or sodium gradient. F-type ATPases consist of two structural domains, F(1) containing the extramembraneous catalytic core and F(0) containing the membrane proton channel, linked together by a central stalk and a peripheral stalk. During catalysis, ATP synthesis in the catalytic domain of F(1) is coupled via a rotary mechanism of the central stalk subunits to proton translocation. Functionally, this protein is part of the stalk that links CF(0) to CF(1). It either transmits conformational changes from CF(0) to CF(1) or is implicated in proton conduction. This Cereibacter sphaeroides (strain ATCC 17025 / ATH 2.4.3) (Rhodobacter sphaeroides) protein is ATP synthase subunit delta.